Here is a 119-residue protein sequence, read N- to C-terminus: Ribonuclease P protein component (119 aa).

The protein belongs to the RnpA family. In terms of assembly, consists of a catalytic RNA component (M1 or rnpB) and a protein subunit.

It catalyses the reaction Endonucleolytic cleavage of RNA, removing 5'-extranucleotides from tRNA precursor.. RNaseP catalyzes the removal of the 5'-leader sequence from pre-tRNA to produce the mature 5'-terminus. It can also cleave other RNA substrates such as 4.5S RNA. The protein component plays an auxiliary but essential role in vivo by binding to the 5'-leader sequence and broadening the substrate specificity of the ribozyme. In Serratia proteamaculans (strain 568), this protein is Ribonuclease P protein component.